Here is a 469-residue protein sequence, read N- to C-terminus: Phosphoenolpyruvate carboxylase (469 aa).

The protein belongs to the PEPCase type 2 family. As to quaternary structure, homotetramer. It depends on Mg(2+) as a cofactor.

It catalyses the reaction oxaloacetate + phosphate = phosphoenolpyruvate + hydrogencarbonate. In terms of biological role, catalyzes the irreversible beta-carboxylation of phosphoenolpyruvate (PEP) to form oxaloacetate (OAA), a four-carbon dicarboxylic acid source for the tricarboxylic acid cycle. This Pyrococcus horikoshii (strain ATCC 700860 / DSM 12428 / JCM 9974 / NBRC 100139 / OT-3) protein is Phosphoenolpyruvate carboxylase.